The following is a 401-amino-acid chain: Voltage-gated potassium channel subunit beta-1 (401 aa).

Thr-90, Trp-91, Gln-97, and Asp-119 together coordinate NADP(+). Tyr-124 acts as the Proton donor/acceptor in catalysis. 17 residues coordinate NADP(+): Asn-192, Ser-222, Arg-223, Gln-248, Trp-277, Ser-278, Pro-279, Leu-280, Ala-281, Cys-282, Lys-288, Arg-298, Gly-357, Ser-359, Gln-363, Glu-366, and Asn-367.

The protein belongs to the shaker potassium channel beta subunit family. Homotetramer. Interaction with tetrameric potassium channel alpha subunits gives rise to a heterooctamer. Identified in potassium channel complexes containing KCNA1, KCNA2, KCNA4, KCNA5, KCNA6, KCNAB1 and KCNAB2. Part of a complex containing KCNA1, KCNA4 and LGI1; interaction with LGI1 inhibits down-regulation of KCNA1 channel activity. Interacts with the dimer formed by GNB1 and GNG2; this enhances KCNA1 binding. Interacts with SQSTM. Detected in brain, in hippocampus and striatum (at protein level). Predominantly expressed in brain. No expression found in heart, skeletal muscle or kidney. In the late embryonic and early neonatal brain, highly expressed in hippocampus, cerebral cortex, caudate putamen, colliculus and cerebellum.

The protein localises to the cytoplasm. It localises to the membrane. It is found in the cell membrane. The enzyme catalyses a primary alcohol + NADP(+) = an aldehyde + NADPH + H(+). It catalyses the reaction a secondary alcohol + NADP(+) = a ketone + NADPH + H(+). Regulatory subunit of the voltage-gated potassium (Kv) Shaker channels composed of pore-forming and potassium-conducting alpha subunits and of regulatory beta subunits. The beta-1/KCNAB1 cytoplasmic subunit mediates closure of delayed rectifier potassium channels by physically obstructing the pore via its N-terminal domain and increases the speed of channel closure for other family members. Promotes the inactivation of KCNA1, KCNA2, KCNA4, KCNA5 and KCNA6 alpha subunit-containing channels. Displays nicotinamide adenine dinucleotide phosphate (NADPH)-dependent aldoketoreductase activity by catalyzing the NADPH-dependent reduction of a variety of endogenous aldehydes and ketones. The binding of NADPH is required for efficient down-regulation of potassium channel activity. Oxidation of the bound NADPH restrains N-terminal domain from blocking the channel, thereby decreasing N-type inactivation of potassium channel activity. This chain is Voltage-gated potassium channel subunit beta-1, found in Mus musculus (Mouse).